Reading from the N-terminus, the 396-residue chain is L-lactate dehydrogenase (396 aa).

The 380-residue stretch at 1-380 (MIISAASDYR…TQDSLVQGLG (380 aa)) folds into the FMN hydroxy acid dehydrogenase domain. Substrate is bound at residue Y24. Positions 106 and 127 each coordinate FMN. Substrate is bound at residue Y129. An FMN-binding site is contributed by T155. R164 lines the substrate pocket. K251 serves as a coordination point for FMN. H275 (proton acceptor) is an active-site residue. Substrate is bound at residue R278. An FMN-binding site is contributed by 306–330 (DSGIRNGLDVVRMIALGADTVLLGR).

Belongs to the FMN-dependent alpha-hydroxy acid dehydrogenase family. The cofactor is FMN.

It is found in the cell inner membrane. It catalyses the reaction (S)-lactate + A = pyruvate + AH2. Catalyzes the conversion of L-lactate to pyruvate. Is coupled to the respiratory chain. This chain is L-lactate dehydrogenase, found in Shigella flexneri serotype 5b (strain 8401).